The following is a 217-amino-acid chain: 3-isopropylmalate dehydratase small subunit (217 aa).

Belongs to the LeuD family. LeuD type 1 subfamily. Heterodimer of LeuC and LeuD.

It catalyses the reaction (2R,3S)-3-isopropylmalate = (2S)-2-isopropylmalate. The protein operates within amino-acid biosynthesis; L-leucine biosynthesis; L-leucine from 3-methyl-2-oxobutanoate: step 2/4. Functionally, catalyzes the isomerization between 2-isopropylmalate and 3-isopropylmalate, via the formation of 2-isopropylmaleate. The polypeptide is 3-isopropylmalate dehydratase small subunit (Paracidovorax citrulli (strain AAC00-1) (Acidovorax citrulli)).